A 316-amino-acid polypeptide reads, in one-letter code: Acetaldehyde dehydrogenase 1 (316 aa).

Residue 12–15 (SGNI) coordinates NAD(+). Residue C132 is the Acyl-thioester intermediate of the active site. NAD(+) contacts are provided by residues 163–171 (SAGPGTRAN) and N291.

This sequence belongs to the acetaldehyde dehydrogenase family.

The catalysed reaction is acetaldehyde + NAD(+) + CoA = acetyl-CoA + NADH + H(+). This chain is Acetaldehyde dehydrogenase 1, found in Pseudomonas putida (strain ATCC 700007 / DSM 6899 / JCM 31910 / BCRC 17059 / LMG 24140 / F1).